The following is a 433-amino-acid chain: Xylose isomerase (433 aa).

Active-site residues include H99 and D102. The Mg(2+) site is built by E230, E266, H269, D294, D305, D307, and D337.

This sequence belongs to the xylose isomerase family. In terms of assembly, homotetramer. Mg(2+) is required as a cofactor.

The protein localises to the cytoplasm. The enzyme catalyses alpha-D-xylose = alpha-D-xylulofuranose. The polypeptide is Xylose isomerase (Cereibacter sphaeroides (strain ATCC 17025 / ATH 2.4.3) (Rhodobacter sphaeroides)).